The sequence spans 161 residues: Dihydrofolate reductase (161 aa).

A DHFR domain is found at 2–161 (KISLISAISN…YNFCFEILSR (160 aa)). 6–8 (ISA) is a substrate binding site. Residues 7–8 (SA) and 15–20 (IGHNNK) each bind NADP(+). Residue Asp-28 participates in substrate binding. Residue 44–47 (GRLT) coordinates NADP(+). Arg-59 is a substrate binding site. Residues 64–66 (ISH) and 96–101 (IGGSKI) each bind NADP(+). Thr-115 is a binding site for substrate.

Belongs to the dihydrofolate reductase family.

The enzyme catalyses (6S)-5,6,7,8-tetrahydrofolate + NADP(+) = 7,8-dihydrofolate + NADPH + H(+). Its pathway is cofactor biosynthesis; tetrahydrofolate biosynthesis; 5,6,7,8-tetrahydrofolate from 7,8-dihydrofolate: step 1/1. Key enzyme in folate metabolism. Catalyzes an essential reaction for de novo glycine and purine synthesis, and for DNA precursor synthesis. This is Dihydrofolate reductase (folA) from Buchnera aphidicola subsp. Schizaphis graminum (strain Sg).